A 726-amino-acid polypeptide reads, in one-letter code: Probable pre-mRNA-splicing factor ATP-dependent RNA helicase DEAH2 (726 aa).

The Helicase ATP-binding domain occupies 71–240 (LKTLNNNQTL…FSGAPLMKVP (170 aa)). 84–91 (GETGSGKT) serves as a coordination point for ATP. A DEAH box motif is present at residues 187–190 (DEAH). Residues 265 to 445 (TVVQIHMCEP…NTVLTLKKLG (181 aa)) enclose the Helicase C-terminal domain.

It belongs to the DEAD box helicase family. DEAH subfamily. PRP43 sub-subfamily.

The catalysed reaction is ATP + H2O = ADP + phosphate + H(+). In terms of biological role, may be involved in pre-mRNA splicing. The sequence is that of Probable pre-mRNA-splicing factor ATP-dependent RNA helicase DEAH2 from Arabidopsis thaliana (Mouse-ear cress).